We begin with the raw amino-acid sequence, 81 residues long: ATP synthase subunit c, chloroplastic (81 aa).

Helical transmembrane passes span 7-27 (AASVIAAGLAVGLASIGPGIG) and 57-77 (LAFMEALTIYGLVVALALLFA).

The protein belongs to the ATPase C chain family. F-type ATPases have 2 components, F(1) - the catalytic core - and F(0) - the membrane proton channel. F(1) has five subunits: alpha(3), beta(3), gamma(1), delta(1), epsilon(1). F(0) has four main subunits: a(1), b(1), b'(1) and c(10-14). The alpha and beta chains form an alternating ring which encloses part of the gamma chain. F(1) is attached to F(0) by a central stalk formed by the gamma and epsilon chains, while a peripheral stalk is formed by the delta, b and b' chains.

Its subcellular location is the plastid. It is found in the chloroplast thylakoid membrane. Its function is as follows. F(1)F(0) ATP synthase produces ATP from ADP in the presence of a proton or sodium gradient. F-type ATPases consist of two structural domains, F(1) containing the extramembraneous catalytic core and F(0) containing the membrane proton channel, linked together by a central stalk and a peripheral stalk. During catalysis, ATP synthesis in the catalytic domain of F(1) is coupled via a rotary mechanism of the central stalk subunits to proton translocation. In terms of biological role, key component of the F(0) channel; it plays a direct role in translocation across the membrane. A homomeric c-ring of between 10-14 subunits forms the central stalk rotor element with the F(1) delta and epsilon subunits. The chain is ATP synthase subunit c, chloroplastic from Staurastrum punctulatum (Green alga).